The primary structure comprises 246 residues: Small ribosomal subunit protein uS2 (246 aa).

It belongs to the universal ribosomal protein uS2 family.

This chain is Small ribosomal subunit protein uS2, found in Azotobacter vinelandii (strain DJ / ATCC BAA-1303).